A 102-amino-acid chain; its full sequence is MQKIRKGDKVVVLAGKDKGRTGEVIQVMPKEDRAVVRGVNVIKRHQRQTQTQEAGIISKEASLHLSNLAIVDKDGKPTRVGFKVVEGKKVRVAKTSGEVIDG.

Belongs to the universal ribosomal protein uL24 family. In terms of assembly, part of the 50S ribosomal subunit.

One of two assembly initiator proteins, it binds directly to the 5'-end of the 23S rRNA, where it nucleates assembly of the 50S subunit. In terms of biological role, one of the proteins that surrounds the polypeptide exit tunnel on the outside of the subunit. This is Large ribosomal subunit protein uL24 from Rhizobium rhizogenes (strain K84 / ATCC BAA-868) (Agrobacterium radiobacter).